A 516-amino-acid chain; its full sequence is Putative Rieske 2Fe-2S iron-sulfur protein MT3926 (516 aa).

Residues 429–516 form the Rieske domain; it reads LYTFFKCLTD…RGHQLRSSRP (88 aa). The [2Fe-2S] cluster site is built by Cys-469, His-471, Cys-489, and His-492.

[2Fe-2S] cluster serves as cofactor.

The polypeptide is Putative Rieske 2Fe-2S iron-sulfur protein MT3926 (Mycobacterium tuberculosis (strain CDC 1551 / Oshkosh)).